The primary structure comprises 302 residues: Haloalkane dehalogenase (302 aa).

One can recognise an AB hydrolase-1 domain in the interval 48 to 152 (PILLMHGEPS…VVVSNTGLPI (105 aa)). Residue D123 is the Nucleophile of the active site. The active-site Proton donor is D249. H278 acts as the Proton acceptor in catalysis.

The protein belongs to the haloalkane dehalogenase family. Type 1 subfamily. Monomer.

The catalysed reaction is 1-haloalkane + H2O = a halide anion + a primary alcohol + H(+). In terms of biological role, catalyzes hydrolytic cleavage of carbon-halogen bonds in halogenated aliphatic compounds, leading to the formation of the corresponding primary alcohols, halide ions and protons. This Caulobacter vibrioides (strain ATCC 19089 / CIP 103742 / CB 15) (Caulobacter crescentus) protein is Haloalkane dehalogenase.